The following is a 432-amino-acid chain: Enolase (432 aa).

A (2R)-2-phosphoglycerate-binding site is contributed by glutamine 164. Glutamate 206 (proton donor) is an active-site residue. Positions 243, 289, and 316 each coordinate Mg(2+). (2R)-2-phosphoglycerate contacts are provided by lysine 341, arginine 370, serine 371, and lysine 392. Residue lysine 341 is the Proton acceptor of the active site.

The protein belongs to the enolase family. Mg(2+) is required as a cofactor.

The protein resides in the cytoplasm. It is found in the secreted. It localises to the cell surface. The catalysed reaction is (2R)-2-phosphoglycerate = phosphoenolpyruvate + H2O. Its pathway is carbohydrate degradation; glycolysis; pyruvate from D-glyceraldehyde 3-phosphate: step 4/5. Functionally, catalyzes the reversible conversion of 2-phosphoglycerate (2-PG) into phosphoenolpyruvate (PEP). It is essential for the degradation of carbohydrates via glycolysis. The sequence is that of Enolase from Borrelia duttonii (strain Ly).